The primary structure comprises 296 residues: Porphobilinogen deaminase (296 aa).

Cys235 carries the S-(dipyrrolylmethanemethyl)cysteine modification.

The protein belongs to the HMBS family. In terms of assembly, monomer. The cofactor is dipyrromethane.

It carries out the reaction 4 porphobilinogen + H2O = hydroxymethylbilane + 4 NH4(+). Its pathway is porphyrin-containing compound metabolism; protoporphyrin-IX biosynthesis; coproporphyrinogen-III from 5-aminolevulinate: step 2/4. Its function is as follows. Tetrapolymerization of the monopyrrole PBG into the hydroxymethylbilane pre-uroporphyrinogen in several discrete steps. This is Porphobilinogen deaminase from Alkaliphilus oremlandii (strain OhILAs) (Clostridium oremlandii (strain OhILAs)).